The following is a 155-amino-acid chain: Small ribosomal subunit protein uS7 (155 aa).

It belongs to the universal ribosomal protein uS7 family. As to quaternary structure, part of the 30S ribosomal subunit. Contacts proteins S9 and S11.

Functionally, one of the primary rRNA binding proteins, it binds directly to 16S rRNA where it nucleates assembly of the head domain of the 30S subunit. Is located at the subunit interface close to the decoding center, probably blocks exit of the E-site tRNA. The chain is Small ribosomal subunit protein uS7 from Pelodictyon phaeoclathratiforme (strain DSM 5477 / BU-1).